A 364-amino-acid polypeptide reads, in one-letter code: Protein trichome birefringence-like 40 (364 aa).

A helical; Signal-anchor for type II membrane protein membrane pass occupies residues Leu9–Ala25. The GDS motif signature appears at Gly118–Ser120. The DCXHWCLPGXXDXWN motif motif lies at Asp341–Asn355.

It belongs to the PC-esterase family. TBL subfamily.

It is found in the membrane. Functionally, may act as a bridging protein that binds pectin and other cell wall polysaccharides. Probably involved in maintaining esterification of pectins. May be involved in the specific O-acetylation of cell wall polymers. The protein is Protein trichome birefringence-like 40 (TBL40) of Arabidopsis thaliana (Mouse-ear cress).